The primary structure comprises 310 residues: HPr kinase/phosphorylase (310 aa).

Catalysis depends on residues His136 and Lys157. 151-158 (GDSGIGKS) serves as a coordination point for ATP. Ser158 contacts Mg(2+). The active-site Proton acceptor; for phosphorylation activity. Proton donor; for dephosphorylation activity is Asp175. An important for the catalytic mechanism of both phosphorylation and dephosphorylation region spans residues 199 to 208 (LEIRGLGIIN). Glu200 is a Mg(2+) binding site. Arg241 is a catalytic residue. The interval 262–267 (PVRPGR) is important for the catalytic mechanism of dephosphorylation.

This sequence belongs to the HPrK/P family. Homohexamer. The cofactor is Mg(2+).

The enzyme catalyses [HPr protein]-L-serine + ATP = [HPr protein]-O-phospho-L-serine + ADP + H(+). It carries out the reaction [HPr protein]-O-phospho-L-serine + phosphate + H(+) = [HPr protein]-L-serine + diphosphate. In terms of biological role, catalyzes the ATP- as well as the pyrophosphate-dependent phosphorylation of a specific serine residue in HPr, a phosphocarrier protein of the phosphoenolpyruvate-dependent sugar phosphotransferase system (PTS). HprK/P also catalyzes the pyrophosphate-producing, inorganic phosphate-dependent dephosphorylation (phosphorolysis) of seryl-phosphorylated HPr (P-Ser-HPr). The two antagonistic activities of HprK/P are regulated by several intracellular metabolites, which change their concentration in response to the absence or presence of rapidly metabolisable carbon sources (glucose, fructose, etc.) in the growth medium. Therefore, by controlling the phosphorylation state of HPr, HPrK/P is a sensor enzyme that plays a major role in the regulation of carbon metabolism and sugar transport: it mediates carbon catabolite repression (CCR), and regulates PTS-catalyzed carbohydrate uptake and inducer exclusion. The protein is HPr kinase/phosphorylase of Staphylococcus epidermidis (strain ATCC 35984 / DSM 28319 / BCRC 17069 / CCUG 31568 / BM 3577 / RP62A).